The following is a 278-amino-acid chain: Ribosomal RNA small subunit methyltransferase A (278 aa).

S-adenosyl-L-methionine is bound by residues Asn25, Leu27, Gly52, Glu73, Asp97, and Asn117.

Belongs to the class I-like SAM-binding methyltransferase superfamily. rRNA adenine N(6)-methyltransferase family. RsmA subfamily.

Its subcellular location is the cytoplasm. The enzyme catalyses adenosine(1518)/adenosine(1519) in 16S rRNA + 4 S-adenosyl-L-methionine = N(6)-dimethyladenosine(1518)/N(6)-dimethyladenosine(1519) in 16S rRNA + 4 S-adenosyl-L-homocysteine + 4 H(+). Specifically dimethylates two adjacent adenosines (A1518 and A1519) in the loop of a conserved hairpin near the 3'-end of 16S rRNA in the 30S particle. May play a critical role in biogenesis of 30S subunits. The polypeptide is Ribosomal RNA small subunit methyltransferase A (Desulfitobacterium hafniense (strain DSM 10664 / DCB-2)).